Reading from the N-terminus, the 385-residue chain is Alanine racemase (385 aa).

The active-site Proton acceptor; specific for D-alanine is the Lys40. The residue at position 40 (Lys40) is an N6-(pyridoxal phosphate)lysine. Arg139 provides a ligand contact to substrate. Tyr268 functions as the Proton acceptor; specific for L-alanine in the catalytic mechanism. Met315 serves as a coordination point for substrate.

The protein belongs to the alanine racemase family. It depends on pyridoxal 5'-phosphate as a cofactor.

It catalyses the reaction L-alanine = D-alanine. The protein operates within amino-acid biosynthesis; D-alanine biosynthesis; D-alanine from L-alanine: step 1/1. Functionally, catalyzes the interconversion of L-alanine and D-alanine. May also act on other amino acids. This Anoxybacillus flavithermus (strain DSM 21510 / WK1) protein is Alanine racemase (alr).